The primary structure comprises 253 residues: Sulfate transporter CysZ (253 aa).

Helical transmembrane passes span 31 to 51, 72 to 92, 151 to 171, and 222 to 242; these read FVIL…WWLF, LSYL…GYFF, IVLL…PVLW, and IPVL…AMWV.

The protein belongs to the CysZ family.

It localises to the cell inner membrane. In terms of biological role, possibly involved in sulfate transport. High affinity, high specificity proton-dependent sulfate transporter, which mediates sulfate uptake. Provides the sulfur source for the cysteine synthesis pathway. This chain is Sulfate transporter CysZ, found in Salmonella typhimurium (strain LT2 / SGSC1412 / ATCC 700720).